The chain runs to 45 residues: Large ribosomal subunit protein bL34 (45 aa).

Belongs to the bacterial ribosomal protein bL34 family.

The chain is Large ribosomal subunit protein bL34 from Kineococcus radiotolerans (strain ATCC BAA-149 / DSM 14245 / SRS30216).